The primary structure comprises 778 residues: MASKSEKAVKKAQKLSKEPSVELTDTKSSDNVTPKQKSPNSTEEDVSLNLKTLKAKKFKLAFVLITVLSFITRFWNLNLPGEVVFDEVHFGKFASYYLQGKYFFDLHPPFAKLLLALVAKLAGYDGHYLFDNIGDNYKDNGVPYVTIRAWPALLSSLVPPVVFLIMKESGYDLLACIVSSSLVLFDNAHVTEGRLILLDATLLFSMVCAIYCYVRFFKLRHTPFSRPWWAWLFFTGFFLSCTISTKYVGFFTFLSIGLSVCLELWYLWDIKTGLTVERFFQHFLARFFCLIFFPFLFFLFWFYMHFNILTISGPGDSFMSLEFQETLSDNPITANSTILNYYDIVTIKHMGTNAFLHSHPEKYPIPYDDGRISSGGQQVTGYQFDDENNYWMILPADHYDPPIEAKLNVPVKNMDYIKLHHVGTNTDLMTHDVASPYHPTNEEFTTVSVDESAGKKHEYTLFQVVMSDNTDPQRPLYTKASSFKLIHKLTHVAMWSDPKPLPDWAFKQLEINGAKNIQTGSIFWTFDDIIGLKDSRLKKEKKIPKKLPFWKKYLELQLTMFRQNNMLTEFHPYSSNPSDWFTLHHGIAFWAKSEENKQIYLLGNPIGWWIIAGTVLSTTVVAAAEILLRQRGIRTLPETVRNHFYRSTMFFYMTYVFHYLPFFIMGRQLFLHHYLPAHLAGSLLVGAFIQLACRKSFRSPVSAGVPIPKDVDEKGHSKCHRKYGHVIELICTLLLIFVVIYCFTFFAPMTYGDKSLSVDEWTRRKWLDSWVFQYQKQN.

The span at 1–28 shows a compositional bias: basic and acidic residues; it reads MASKSEKAVKKAQKLSKEPSVELTDTKS. Positions 1-44 are disordered; the sequence is MASKSEKAVKKAQKLSKEPSVELTDTKSSDNVTPKQKSPNSTEE. Positions 29-41 are enriched in polar residues; the sequence is SDNVTPKQKSPNS. N40 carries N-linked (GlcNAc...) asparagine glycosylation. Helical transmembrane passes span 60 to 80, 103 to 123, 145 to 165, 196 to 216, 223 to 243, 248 to 268, and 288 to 308; these read LAFVLITVLSFITRFWNLNLP, FFDLHPPFAKLLLALVAKLAG, VTIRAWPALLSSLVPPVVFLI, ILLDATLLFSMVCAIYCYVRF, PFSRPWWAWLFFTGFFLSCTI, VGFFTFLSIGLSVCLELWYLW, and FCLIFFPFLFFLFWFYMHFNI. N-linked (GlcNAc...) asparagine glycosylation occurs at N335. 3 consecutive MIR domains span residues 336–396, 408–467, and 474–529; these read STIL…ILPA, NVPV…VVMS, and RPLY…FDDI. A run of 4 helical transmembrane segments spans residues 608–628, 644–664, 669–689, and 726–746; these read WWIIAGTVLSTTVVAAAEILL, FYRSTMFFYMTYVFHYLPFFI, LFLHHYLPAHLAGSLLVGAFI, and VIELICTLLLIFVVIYCFTFF.

Belongs to the glycosyltransferase 39 family.

The protein resides in the endoplasmic reticulum membrane. It catalyses the reaction a di-trans,poly-cis-dolichyl beta-D-mannosyl phosphate + L-seryl-[protein] = 3-O-(alpha-D-mannosyl)-L-seryl-[protein] + a di-trans,poly-cis-dolichyl phosphate + H(+). It carries out the reaction a di-trans,poly-cis-dolichyl beta-D-mannosyl phosphate + L-threonyl-[protein] = 3-O-(alpha-D-mannosyl)-L-threonyl-[protein] + a di-trans,poly-cis-dolichyl phosphate + H(+). The protein operates within protein modification; protein glycosylation. Transfers mannose from Dol-P-mannose to Ser or Thr residues on proteins. Required for normal cell wall and septum formation. The protein is Dolichyl-phosphate-mannose--protein mannosyltransferase 4 (ogm4) of Schizosaccharomyces pombe (strain 972 / ATCC 24843) (Fission yeast).